The primary structure comprises 248 residues: MKFLVLVAFLGVAVAFPISDEDDDKIVGGYSCARSAAPYQVSLNSGYHFCGGSLISSQWVLSAAHCYKSSIQVKLGEYNLAAQDGSEQTISSSKVIRHSGYNANTLNNDIMLIKLSKAATLNSYVNTVPLPTSCVTAGTTCLISGWGNTLSSGSLYPDVLQCLNAPVLSSSQCSSAYPGRITSNMICIGYLNGGKDSCQGDSGGPVVCNGQLQGFVSWGIGCAQKGYPGVYTKVCNYVSWIKTTMSSN.

Residues 1–15 (MKFLVLVAFLGVAVA) form the signal peptide. Positions 16–25 (FPISDEDDDK) are cleaved as a propeptide — activation peptide. Residues 26–246 (IVGGYSCARS…YVSWIKTTMS (221 aa)) enclose the Peptidase S1 domain. Intrachain disulfides connect Cys32-Cys162, Cys50-Cys66, Cys134-Cys235, Cys141-Cys208, Cys173-Cys187, and Cys198-Cys222. The active-site Charge relay system is His65. Residues Glu77, Asn79, and Glu87 each coordinate Ca(2+). Asp109 acts as the Charge relay system in catalysis. The active-site Charge relay system is Ser202.

This sequence belongs to the peptidase S1 family. It depends on Ca(2+) as a cofactor. As to expression, high levels are seen in the pancreas while lower levels are found in the liver, spleen and thymus.

It localises to the secreted. Its subcellular location is the extracellular space. It catalyses the reaction Preferential cleavage: Arg-|-Xaa, Lys-|-Xaa.. In Gallus gallus (Chicken), this protein is Trypsin I-P38.